A 1103-amino-acid chain; its full sequence is Coatomer subunit beta (1103 aa).

7 HEAT repeats span residues 51–89, 94–129, 130–166, 247–284, 322–359, 365–404, and 405–441; these read EAYTRLLMTVIRYAMPSKDKRVKKLTQLYLEIVGKCRPD, EEMILICNALRNDLMSPNEYVRGSTLRLLSKIRQFK, VLEPLVEAILQNLTHRHSYVRRNAVMCVYSIVKNFGL, QQKAGLLRLIVSILPNTLPSVAYEGACSLLALSRAPVS, RTMEEFVIDLLRGLQTPSLEVRRKILDLVLQIVGKNSV, VLKRELLRTAEPEQLTVPRTMEYRRLLIKAVHSCCTRFPE, and AAASVVNVLIDFPGDPDVTTATEVAVVVRELVATCVH.

In terms of assembly, oligomeric complex that consists of at least the alpha, beta, beta', gamma, delta, epsilon and zeta subunits.

Its subcellular location is the cytoplasm. It is found in the golgi apparatus membrane. The protein resides in the cytoplasmic vesicle. The protein localises to the COPI-coated vesicle membrane. The coatomer is a cytosolic protein complex that binds to dilysine motifs and reversibly associates with Golgi non-clathrin-coated vesicles, which further mediate biosynthetic protein transport from the ER, via the Golgi up to the trans Golgi network. Coatomer complex is required for budding from Golgi membranes, and is essential for the retrograde Golgi-to-ER transport of dilysine-tagged proteins. This chain is Coatomer subunit beta, found in Toxoplasma gondii.